The following is a 138-amino-acid chain: Large ribosomal subunit protein uL16 (138 aa).

Positions Met1–Gln13 are enriched in basic residues. The tract at residues Met1–Ala21 is disordered.

The protein belongs to the universal ribosomal protein uL16 family. As to quaternary structure, part of the 50S ribosomal subunit.

Binds 23S rRNA and is also seen to make contacts with the A and possibly P site tRNAs. This is Large ribosomal subunit protein uL16 from Albidiferax ferrireducens (strain ATCC BAA-621 / DSM 15236 / T118) (Rhodoferax ferrireducens).